We begin with the raw amino-acid sequence, 102 residues long: MALNQQDVARIARLARIELTPEQQSRAQDELNGILHLIERLQAVDTQGVEPLAHPLSAHEDIPLRLRQDAVTETASAERRAELLANAPEQSAGLFLVPKVIE.

It belongs to the GatC family. Heterotrimer of A, B and C subunits.

It catalyses the reaction L-glutamyl-tRNA(Gln) + L-glutamine + ATP + H2O = L-glutaminyl-tRNA(Gln) + L-glutamate + ADP + phosphate + H(+). The enzyme catalyses L-aspartyl-tRNA(Asn) + L-glutamine + ATP + H2O = L-asparaginyl-tRNA(Asn) + L-glutamate + ADP + phosphate + 2 H(+). Functionally, allows the formation of correctly charged Asn-tRNA(Asn) or Gln-tRNA(Gln) through the transamidation of misacylated Asp-tRNA(Asn) or Glu-tRNA(Gln) in organisms which lack either or both of asparaginyl-tRNA or glutaminyl-tRNA synthetases. The reaction takes place in the presence of glutamine and ATP through an activated phospho-Asp-tRNA(Asn) or phospho-Glu-tRNA(Gln). This Bordetella avium (strain 197N) protein is Aspartyl/glutamyl-tRNA(Asn/Gln) amidotransferase subunit C.